The following is a 426-amino-acid chain: 3-phosphoshikimate 1-carboxyvinyltransferase (426 aa).

3 residues coordinate 3-phosphoshikimate: K22, S23, and R27. K22 is a phosphoenolpyruvate binding site. Phosphoenolpyruvate contacts are provided by G96 and R124. 3-phosphoshikimate is bound by residues S170, S171, Q172, S198, D314, N337, and K341. Residue Q172 coordinates phosphoenolpyruvate. Catalysis depends on D314, which acts as the Proton acceptor. R345, R387, and K412 together coordinate phosphoenolpyruvate.

This sequence belongs to the EPSP synthase family. In terms of assembly, monomer.

It is found in the cytoplasm. The catalysed reaction is 3-phosphoshikimate + phosphoenolpyruvate = 5-O-(1-carboxyvinyl)-3-phosphoshikimate + phosphate. It functions in the pathway metabolic intermediate biosynthesis; chorismate biosynthesis; chorismate from D-erythrose 4-phosphate and phosphoenolpyruvate: step 6/7. In terms of biological role, catalyzes the transfer of the enolpyruvyl moiety of phosphoenolpyruvate (PEP) to the 5-hydroxyl of shikimate-3-phosphate (S3P) to produce enolpyruvyl shikimate-3-phosphate and inorganic phosphate. This Shewanella woodyi (strain ATCC 51908 / MS32) protein is 3-phosphoshikimate 1-carboxyvinyltransferase.